A 402-amino-acid chain; its full sequence is MSRVSQARNLGKYFLLIDNMLVVLGFFVVFPLISIRFVDQMGWAAVMVGIALGLRQFIQQGLGIFGGAIADRFGAKPMIVTGMLMRAAGFATMGIAHEPWLLWFSCLLSGLGGTLFDPPRSALVVKLIRPQQRGRFFSLLMMQDSAGAVIGALLGSWLLQYDFRLVCATGAVLFVLCAAFNAWLLPAWKLSTVRTPVREGMTRVMRDKRFVTYVLTLAGYYMLAVQVMLMLPIMVNDVAGAPSAVKWMYAIEACLSLTLLYPIARWSEKHFRLEHRLMAGLLIMSLSMMPVGMVSGLQQLFTLICLFYIGSIIAEPARETLSASLADARARGSYMGFSRLGLAIGGAIGYIGGGWLFDLGKSAHQPELPWMMLGIIGIFTFLALGWQFSQKRAARRLLERDA.

The Cytoplasmic segment spans residues 1 to 12 (MSRVSQARNLGK). Residues 13-33 (YFLLIDNMLVVLGFFVVFPLI) traverse the membrane as a helical segment. Over 34–98 (SIRFVDQMGW…GFATMGIAHE (65 aa)) the chain is Periplasmic. A helical transmembrane segment spans residues 99–116 (PWLLWFSCLLSGLGGTLF). The Cytoplasmic portion of the chain corresponds to 117-138 (DPPRSALVVKLIRPQQRGRFFS). The helical transmembrane segment at 139 to 159 (LLMMQDSAGAVIGALLGSWLL) threads the bilayer. Residues 160–164 (QYDFR) are Periplasmic-facing. A helical membrane pass occupies residues 165–185 (LVCATGAVLFVLCAAFNAWLL). The Cytoplasmic portion of the chain corresponds to 186–213 (PAWKLSTVRTPVREGMTRVMRDKRFVTY). A helical transmembrane segment spans residues 214–234 (VLTLAGYYMLAVQVMLMLPIM). At 235–243 (VNDVAGAPS) the chain is on the periplasmic side. The helical transmembrane segment at 244 to 264 (AVKWMYAIEACLSLTLLYPIA) threads the bilayer. Over 265-276 (RWSEKHFRLEHR) the chain is Cytoplasmic. A helical transmembrane segment spans residues 277-297 (LMAGLLIMSLSMMPVGMVSGL). Residues 298 to 299 (QQ) are Periplasmic-facing. Residues 300-320 (LFTLICLFYIGSIIAEPARET) traverse the membrane as a helical segment. The Cytoplasmic portion of the chain corresponds to 321 to 339 (LSASLADARARGSYMGFSR). A helical membrane pass occupies residues 340–360 (LGLAIGGAIGYIGGGWLFDLG). Topologically, residues 361-367 (KSAHQPE) are periplasmic. The chain crosses the membrane as a helical span at residues 368 to 388 (LPWMMLGIIGIFTFLALGWQF). The Cytoplasmic portion of the chain corresponds to 389-402 (SQKRAARRLLERDA).

The protein belongs to the major facilitator superfamily. DHA1 family. MdtH (TC 2.A.1.2.21) subfamily.

It localises to the cell inner membrane. In terms of biological role, confers resistance to norfloxacin and enoxacin. This Escherichia coli O139:H28 (strain E24377A / ETEC) protein is Multidrug resistance protein MdtH.